The following is an 81-amino-acid chain: Gamma-conotoxin-like TeA53 (81 aa).

Residues 1–19 form the signal peptide; the sequence is MQKLTILLLVAAVLMSTQA. The propeptide occupies 20–42; that stretch reads LNQEQHQRAKINLLSKRKPPAER. 3 disulfides stabilise this stretch: cysteine 49-cysteine 63, cysteine 56-cysteine 67, and cysteine 62-cysteine 72.

This sequence belongs to the conotoxin O2 superfamily. As to expression, expressed by the venom duct.

The protein resides in the secreted. Its function is as follows. Gamma-conotoxins may act on voltage-gated non-specific cation pacemaker channels (HCN). This is Gamma-conotoxin-like TeA53 from Conus textile (Cloth-of-gold cone).